The chain runs to 314 residues: MMGSAQTLATRHAPNPRGLVMGMGLKTLQKRLSHLTGNAIRDYRMIEEGDRVMVCLSGGKDSYALLDVLLRLQKRAPVRFELVAVNLDQKQPGFPEHVLPEYLASLGVPYRILEADTYSTVERVIPEGKTKCSLCSRLRRGLLYGAAEEMGCSKIALGHHRDDILETFFLNLFYGGRLAAMPPKLRSNNGRHVVIRPLAYVPEPYLERYAERMAFPIIPCTLCGSQPDLKRQMIKAMLREWGEIEPRRLANIFSALQNVQPSHLADKELYDFINLVGSVQPGEDPVSALETPHGDGFPAAEVLSGVQRHDPQSA.

The PP-loop motif signature appears at 57 to 62 (SGGKDS). Positions 132, 135, and 223 each coordinate [4Fe-4S] cluster.

The protein belongs to the TtcA family. As to quaternary structure, homodimer. Mg(2+) serves as cofactor. The cofactor is [4Fe-4S] cluster.

The protein localises to the cytoplasm. The enzyme catalyses cytidine(32) in tRNA + S-sulfanyl-L-cysteinyl-[cysteine desulfurase] + AH2 + ATP = 2-thiocytidine(32) in tRNA + L-cysteinyl-[cysteine desulfurase] + A + AMP + diphosphate + H(+). It functions in the pathway tRNA modification. Its function is as follows. Catalyzes the ATP-dependent 2-thiolation of cytidine in position 32 of tRNA, to form 2-thiocytidine (s(2)C32). The sulfur atoms are provided by the cysteine/cysteine desulfurase (IscS) system. This chain is tRNA-cytidine(32) 2-sulfurtransferase, found in Alkalilimnicola ehrlichii (strain ATCC BAA-1101 / DSM 17681 / MLHE-1).